A 149-amino-acid polypeptide reads, in one-letter code: Glutamate mutase sigma subunit (149 aa).

A B12-binding domain is found at 5–138 (DPTVVLGTIG…DAVKTELDVD (134 aa)). Residues 15-19 (SDAHA), histidine 18, 63-65 (SSL), and 94-98 (NLAVG) each bind adenosylcob(III)alamin.

This sequence belongs to the methylaspartate mutase GlmS subunit family. As to quaternary structure, heterotetramer composed of 2 epsilon subunits (GlmE) and 2 sigma subunits (GlmS). GlmE exists as a homodimer and GlmS as a monomer. It depends on adenosylcob(III)alamin as a cofactor.

It carries out the reaction (2S,3S)-3-methyl-L-aspartate = L-glutamate. It participates in amino-acid degradation; L-glutamate degradation via mesaconate pathway; acetate and pyruvate from L-glutamate: step 1/4. Its function is as follows. Catalyzes the carbon skeleton rearrangement of L-glutamate to L-threo-3-methylaspartate ((2S,3S)-3-methylaspartate). This Halobacterium salinarum (strain ATCC 700922 / JCM 11081 / NRC-1) (Halobacterium halobium) protein is Glutamate mutase sigma subunit.